Reading from the N-terminus, the 552-residue chain is Lon protease 2 (552 aa).

97 to 104 (GPPGVGKT) lines the ATP pocket. In terms of domain architecture, Lon proteolytic spans 349–535 (EPQVGIVNGL…QEVLDEILVN (187 aa)). Active-site residues include Ser-445 and Lys-488.

Belongs to the peptidase S16 family. In terms of assembly, homohexamer. Organized in a ring with a central cavity.

The protein resides in the cytoplasm. It carries out the reaction Hydrolysis of proteins in presence of ATP.. ATP-dependent serine protease that mediates the selective degradation of mutant and abnormal proteins as well as certain short-lived regulatory proteins. Required for cellular homeostasis and for survival from DNA damage and developmental changes induced by stress. Degrades polypeptides processively to yield small peptide fragments that are 5 to 10 amino acids long. Binds to DNA in a double-stranded, site-specific manner. This Bacillus subtilis (strain 168) protein is Lon protease 2 (lon2).